A 583-amino-acid chain; its full sequence is Probable phosphoglucomutase, cytoplasmic 1 (583 aa).

Residues Arg-24 and Ser-123 each coordinate alpha-D-glucose 1,6-bisphosphate. The active-site Phosphoserine intermediate is Ser-123. Residues Ser-123, Asp-299, Asp-301, and Asp-303 each contribute to the Mg(2+) site. At Ser-123 the chain carries Phosphoserine. Alpha-D-glucose 1,6-bisphosphate is bound by residues Asp-303, Arg-304, Thr-367, Glu-386, Ser-388, and Lys-399.

This sequence belongs to the phosphohexose mutase family. In terms of assembly, monomer. It depends on Mg(2+) as a cofactor.

The protein localises to the cytoplasm. The catalysed reaction is alpha-D-glucose 1-phosphate = alpha-D-glucose 6-phosphate. The enzyme catalyses O-phospho-L-seryl-[protein] + alpha-D-glucose 1-phosphate = alpha-D-glucose 1,6-bisphosphate + L-seryl-[protein]. It carries out the reaction alpha-D-glucose 1,6-bisphosphate + L-seryl-[protein] = O-phospho-L-seryl-[protein] + alpha-D-glucose 6-phosphate. In terms of biological role, catalyzes the reversible isomerization of alpha-D-glucose 1-phosphate to alpha-D-glucose 6-phosphate. The mechanism proceeds via the intermediate compound alpha-D-glucose 1,6-bisphosphate. This enzyme participates in both the breakdown and synthesis of glucose. This Arabidopsis thaliana (Mouse-ear cress) protein is Probable phosphoglucomutase, cytoplasmic 1.